The chain runs to 62 residues: Pelophylaxin-4 (62 aa).

A signal peptide spans 1–22; it reads MLTLKKSMLLIFFLGTINFSLC. Positions 23-45 are excised as a propeptide; the sequence is EQERNADEEERRDEPEERDVEVQ. Leu-60 is modified (leucine amide). Gly-61 is a propeptide.

Expressed by the skin glands.

It is found in the secreted. Antimicrobial peptide. The protein is Pelophylaxin-4 of Pelophylax fukienensis (Fukien gold-striped pond frog).